Consider the following 344-residue polypeptide: N-acetyl-gamma-glutamyl-phosphate reductase (344 aa).

Residue Cys150 is part of the active site.

Belongs to the NAGSA dehydrogenase family. Type 1 subfamily.

It localises to the cytoplasm. The enzyme catalyses N-acetyl-L-glutamate 5-semialdehyde + phosphate + NADP(+) = N-acetyl-L-glutamyl 5-phosphate + NADPH + H(+). It functions in the pathway amino-acid biosynthesis; L-arginine biosynthesis; N(2)-acetyl-L-ornithine from L-glutamate: step 3/4. Functionally, catalyzes the NADPH-dependent reduction of N-acetyl-5-glutamyl phosphate to yield N-acetyl-L-glutamate 5-semialdehyde. The chain is N-acetyl-gamma-glutamyl-phosphate reductase from Ectopseudomonas mendocina (strain ymp) (Pseudomonas mendocina).